A 127-amino-acid polypeptide reads, in one-letter code: Aspartate 1-decarboxylase (127 aa).

The active-site Schiff-base intermediate with substrate; via pyruvic acid is Ser-25. Residue Ser-25 is modified to Pyruvic acid (Ser). Thr-57 is a binding site for substrate. Tyr-58 (proton donor) is an active-site residue. Substrate is bound at residue 73-75; it reads GSA.

The protein belongs to the PanD family. In terms of assembly, heterooctamer of four alpha and four beta subunits. Requires pyruvate as cofactor. Post-translationally, is synthesized initially as an inactive proenzyme, which is activated by self-cleavage at a specific serine bond to produce a beta-subunit with a hydroxyl group at its C-terminus and an alpha-subunit with a pyruvoyl group at its N-terminus.

Its subcellular location is the cytoplasm. The catalysed reaction is L-aspartate + H(+) = beta-alanine + CO2. It functions in the pathway cofactor biosynthesis; (R)-pantothenate biosynthesis; beta-alanine from L-aspartate: step 1/1. Its function is as follows. Catalyzes the pyruvoyl-dependent decarboxylation of aspartate to produce beta-alanine. The sequence is that of Aspartate 1-decarboxylase from Dechloromonas aromatica (strain RCB).